A 186-amino-acid polypeptide reads, in one-letter code: Ribosome-recycling factor (186 aa).

This sequence belongs to the RRF family.

It localises to the cytoplasm. Its function is as follows. Responsible for the release of ribosomes from messenger RNA at the termination of protein biosynthesis. May increase the efficiency of translation by recycling ribosomes from one round of translation to another. The sequence is that of Ribosome-recycling factor from Allorhizobium ampelinum (strain ATCC BAA-846 / DSM 112012 / S4) (Agrobacterium vitis (strain S4)).